The chain runs to 938 residues: Isoleucine--tRNA ligase (938 aa).

Residues 58–68 carry the 'HIGH' region motif; that stretch reads PYANGNIHIGH. Glutamate 562 is an L-isoleucyl-5'-AMP binding site. Residues 603–607 carry the 'KMSKS' region motif; the sequence is KMSKS. Residue lysine 606 participates in ATP binding. Zn(2+) is bound by residues cysteine 901, cysteine 904, cysteine 921, and cysteine 924.

Belongs to the class-I aminoacyl-tRNA synthetase family. IleS type 1 subfamily. As to quaternary structure, monomer. Requires Zn(2+) as cofactor.

Its subcellular location is the cytoplasm. The catalysed reaction is tRNA(Ile) + L-isoleucine + ATP = L-isoleucyl-tRNA(Ile) + AMP + diphosphate. Its function is as follows. Catalyzes the attachment of isoleucine to tRNA(Ile). As IleRS can inadvertently accommodate and process structurally similar amino acids such as valine, to avoid such errors it has two additional distinct tRNA(Ile)-dependent editing activities. One activity is designated as 'pretransfer' editing and involves the hydrolysis of activated Val-AMP. The other activity is designated 'posttransfer' editing and involves deacylation of mischarged Val-tRNA(Ile). The sequence is that of Isoleucine--tRNA ligase from Actinobacillus pleuropneumoniae serotype 5b (strain L20).